Here is a 926-residue protein sequence, read N- to C-terminus: Vacuolar protein sorting-associated protein 39 homolog (926 aa).

A CNH domain is found at 15 to 306 (PVEVTCLAFQ…MTLCSGARGQ (292 aa)). Residues 590-768 (DETEMARNLN…LFRTLVHPNQ (179 aa)) form a CHCR repeat.

Belongs to the VAM6/VPS39 family. Probable core component of the homotypic fusion and vacuole protein sorting (HOPS) complex consisting of the core class C Vps proteins vps-11, vps-16, vps-18, and which further associates with vps-33.1, vps-39 and vps-41. May interact with lgg-2. Interacts with cuti-1.

It is found in the cytoplasm. The protein resides in the lysosome membrane. Its subcellular location is the late endosome membrane. The protein localises to the late endosome. It localises to the lysosome. In terms of biological role, plays a role in vesicle-mediated protein trafficking to lysosomal compartments including the endocytic membrane transport and autophagic pathways. Believed to act in part as a component of the putative HOPS endosomal tethering complex which is proposed to be involved in the rab-5-to-rab-7 endosome conversion probably implicating sand-1, and via binding SNAREs and SNARE complexes to mediate tethering and docking events during SNARE-mediated membrane fusion. The HOPS complex is proposed to be recruited to rab-7 on the late endosomal membrane and to regulate late endocytic, phagocytic and autophagic traffic towards lysosomes. Involved in homotypic vesicle fusions between late endosomes and in heterotypic fusions between late endosomes and lysosomes. Required for fusion of endosomes. In association with lgg-2 mediates the tethering of autophagosomes with lysosomes to form autolysosomes. Within the HOPS complex, contributes to the normal development of gut granules in embryonic and adult intestinal cells. The sequence is that of Vacuolar protein sorting-associated protein 39 homolog from Caenorhabditis elegans.